The following is a 588-amino-acid chain: Urease subunit alpha (588 aa).

Residues 149 to 588 (GGIDTHIHFI…LPMAQRYFLF (440 aa)) form the Urease domain. The Ni(2+) site is built by histidine 154, histidine 156, and lysine 237. Lysine 237 is modified (N6-carboxylysine). Substrate is bound at residue histidine 239. The Ni(2+) site is built by histidine 266 and histidine 292. Residue histidine 340 is the Proton donor of the active site. Residue aspartate 380 coordinates Ni(2+).

The protein belongs to the metallo-dependent hydrolases superfamily. Urease alpha subunit family. As to quaternary structure, heterotrimer of UreA (gamma), UreB (beta) and UreC (alpha) subunits. Three heterotrimers associate to form the active enzyme. Ni cation serves as cofactor. In terms of processing, carboxylation allows a single lysine to coordinate two nickel ions.

Its subcellular location is the cytoplasm. It carries out the reaction urea + 2 H2O + H(+) = hydrogencarbonate + 2 NH4(+). It participates in nitrogen metabolism; urea degradation; CO(2) and NH(3) from urea (urease route): step 1/1. In Opitutus terrae (strain DSM 11246 / JCM 15787 / PB90-1), this protein is Urease subunit alpha.